The sequence spans 110 residues: uncharacterized protein (110 aa).

This is an uncharacterized protein from Homo sapiens (Human).